Consider the following 335-residue polypeptide: Pyridoxal 5'-phosphate synthase subunit PdxS (335 aa).

D59 lines the D-ribose 5-phosphate pocket. K116 serves as the catalytic Schiff-base intermediate with D-ribose 5-phosphate. D-ribose 5-phosphate is bound at residue G188. D-glyceraldehyde 3-phosphate is bound at residue K200. D-ribose 5-phosphate-binding positions include G253 and 274–275 (GS).

This sequence belongs to the PdxS/SNZ family. In terms of assembly, in the presence of PdxT, forms a dodecamer of heterodimers.

The catalysed reaction is aldehydo-D-ribose 5-phosphate + D-glyceraldehyde 3-phosphate + L-glutamine = pyridoxal 5'-phosphate + L-glutamate + phosphate + 3 H2O + H(+). It functions in the pathway cofactor biosynthesis; pyridoxal 5'-phosphate biosynthesis. Its function is as follows. Catalyzes the formation of pyridoxal 5'-phosphate from ribose 5-phosphate (RBP), glyceraldehyde 3-phosphate (G3P) and ammonia. The ammonia is provided by the PdxT subunit. Can also use ribulose 5-phosphate and dihydroxyacetone phosphate as substrates, resulting from enzyme-catalyzed isomerization of RBP and G3P, respectively. The protein is Pyridoxal 5'-phosphate synthase subunit PdxS of Desulfurococcus amylolyticus (strain DSM 18924 / JCM 16383 / VKM B-2413 / 1221n) (Desulfurococcus kamchatkensis).